The primary structure comprises 199 residues: Protein GrpE (199 aa).

Residues 1–24 are compositionally biased toward basic and acidic residues; the sequence is MSKQNKKDWKKFKDEHKEEHKVEN. Positions 1–47 are disordered; it reads MSKQNKKDWKKFKDEHKEEHKVENEILEEEIDEKSQHQEPALGHPSY.

The protein belongs to the GrpE family. As to quaternary structure, homodimer.

It localises to the cytoplasm. Functionally, participates actively in the response to hyperosmotic and heat shock by preventing the aggregation of stress-denatured proteins, in association with DnaK and GrpE. It is the nucleotide exchange factor for DnaK and may function as a thermosensor. Unfolded proteins bind initially to DnaJ; upon interaction with the DnaJ-bound protein, DnaK hydrolyzes its bound ATP, resulting in the formation of a stable complex. GrpE releases ADP from DnaK; ATP binding to DnaK triggers the release of the substrate protein, thus completing the reaction cycle. Several rounds of ATP-dependent interactions between DnaJ, DnaK and GrpE are required for fully efficient folding. This is Protein GrpE from Legionella pneumophila (strain Paris).